The following is a 117-amino-acid chain: UPF0342 protein GWCH70_0629 (117 aa).

Belongs to the UPF0342 family.

The polypeptide is UPF0342 protein GWCH70_0629 (Geobacillus sp. (strain WCH70)).